The primary structure comprises 386 residues: Protein phosphatase methylesterase 1 (386 aa).

The segment at 1-38 (MSALEKSMHLGRLPSRPPLPGSGGSQSGAKMRMGPGRK) is disordered. Residue serine 15 is modified to Phosphoserine. Asymmetric dimethylarginine; alternate is present on arginine 16. Arginine 16 is subject to Omega-N-methylarginine; alternate. Serine 42 is subject to Phosphoserine. The active site involves serine 156. Residues 254–265 (IIEEEEEDEEGS) show a composition bias toward acidic residues. A disordered region spans residues 254–280 (IIEEEEEDEEGSESISKRKKEDDMETK). Positions 268–280 (ISKRKKEDDMETK) are enriched in basic and acidic residues. Histidine 349 is an active-site residue.

It belongs to the AB hydrolase superfamily. Binds PPP2CA and PPP2CB. Phosphorylated by SIK1 following increases in intracellular sodium, leading to dissociation from the protein phosphatase 2A (PP2A) complex and subsequent dephosphorylation of sodium/potassium-transporting ATPase ATP1A1.

The catalysed reaction is [phosphatase 2A protein]-C-terminal L-leucine methyl ester + H2O = [phosphatase 2A protein]-C-terminal L-leucine + methanol + H(+). Functionally, demethylates proteins that have been reversibly carboxymethylated. Demethylates PPP2CB (in vitro) and PPP2CA. Binding to PPP2CA displaces the manganese ion and inactivates the enzyme. The sequence is that of Protein phosphatase methylesterase 1 (PPME1) from Pongo abelii (Sumatran orangutan).